Consider the following 487-residue polypeptide: Protein nucleotidyltransferase YdiU (487 aa).

The ATP site is built by Gly92, Arg95, Lys106, Asp118, Gly119, Arg169, and Arg176. Asp253 functions as the Proton acceptor in the catalytic mechanism. Positions 254 and 263 each coordinate Mg(2+). Asp263 contacts ATP.

The protein belongs to the SELO family. Requires Mg(2+) as cofactor. It depends on Mn(2+) as a cofactor.

It catalyses the reaction L-seryl-[protein] + ATP = 3-O-(5'-adenylyl)-L-seryl-[protein] + diphosphate. The enzyme catalyses L-threonyl-[protein] + ATP = 3-O-(5'-adenylyl)-L-threonyl-[protein] + diphosphate. It carries out the reaction L-tyrosyl-[protein] + ATP = O-(5'-adenylyl)-L-tyrosyl-[protein] + diphosphate. The catalysed reaction is L-histidyl-[protein] + UTP = N(tele)-(5'-uridylyl)-L-histidyl-[protein] + diphosphate. It catalyses the reaction L-seryl-[protein] + UTP = O-(5'-uridylyl)-L-seryl-[protein] + diphosphate. The enzyme catalyses L-tyrosyl-[protein] + UTP = O-(5'-uridylyl)-L-tyrosyl-[protein] + diphosphate. Functionally, nucleotidyltransferase involved in the post-translational modification of proteins. It can catalyze the addition of adenosine monophosphate (AMP) or uridine monophosphate (UMP) to a protein, resulting in modifications known as AMPylation and UMPylation. The sequence is that of Protein nucleotidyltransferase YdiU from Bordetella pertussis (strain Tohama I / ATCC BAA-589 / NCTC 13251).